The following is a 434-amino-acid chain: Serine hydroxymethyltransferase (434 aa).

Residues Leu-133 and 137–139 (GHL) contribute to the (6S)-5,6,7,8-tetrahydrofolate site. Position 242 is an N6-(pyridoxal phosphate)lysine (Lys-242).

It belongs to the SHMT family. As to quaternary structure, homodimer. It depends on pyridoxal 5'-phosphate as a cofactor.

It is found in the cytoplasm. It catalyses the reaction (6R)-5,10-methylene-5,6,7,8-tetrahydrofolate + glycine + H2O = (6S)-5,6,7,8-tetrahydrofolate + L-serine. It participates in one-carbon metabolism; tetrahydrofolate interconversion. It functions in the pathway amino-acid biosynthesis; glycine biosynthesis; glycine from L-serine: step 1/1. Its function is as follows. Catalyzes the reversible interconversion of serine and glycine with tetrahydrofolate (THF) serving as the one-carbon carrier. This reaction serves as the major source of one-carbon groups required for the biosynthesis of purines, thymidylate, methionine, and other important biomolecules. Also exhibits THF-independent aldolase activity toward beta-hydroxyamino acids, producing glycine and aldehydes, via a retro-aldol mechanism. This is Serine hydroxymethyltransferase from Caulobacter sp. (strain K31).